A 470-amino-acid chain; its full sequence is Zinc finger and BTB domain-containing protein 8A.1-A (470 aa).

The BTB domain occupies 24–92 (CDCHIIVEGQ…VYSGKLPLSG (69 aa)). A disordered region spans residues 260 to 280 (EDEDAASHSWPESPQQESLDQ). Over residues 269-278 (WPESPQQESL) the composition is skewed to polar residues. 2 C2H2-type zinc fingers span residues 316 to 338 (FKCPFCTHTVKRKADLKRHLRCH) and 344 to 367 (YPCEACGKRFTRLEHLRNHFQTIH). Positions 439 to 450 (GRKENGSERAES) are enriched in basic and acidic residues. The disordered stretch occupies residues 439–470 (GRKENGSERAESDLAIQEVVDSEDDELKEKQD).

It is found in the nucleus. May be involved in transcriptional regulation. In Xenopus laevis (African clawed frog), this protein is Zinc finger and BTB domain-containing protein 8A.1-A (zbtb8a.1-a).